A 452-amino-acid chain; its full sequence is Phosphoglucosamine mutase (452 aa).

S103 serves as the catalytic Phosphoserine intermediate. 4 residues coordinate Mg(2+): S103, D243, D245, and D247. S103 bears the Phosphoserine mark.

Belongs to the phosphohexose mutase family. It depends on Mg(2+) as a cofactor. Post-translationally, activated by phosphorylation.

The enzyme catalyses alpha-D-glucosamine 1-phosphate = D-glucosamine 6-phosphate. In terms of biological role, catalyzes the conversion of glucosamine-6-phosphate to glucosamine-1-phosphate. The protein is Phosphoglucosamine mutase of Limosilactobacillus fermentum (strain NBRC 3956 / LMG 18251) (Lactobacillus fermentum).